The sequence spans 591 residues: Heterogeneous nuclear ribonucleoprotein L-like (591 aa).

Positions 1-120 (MSSSSSSSPK…STEGGGSHHK (120 aa)) are disordered. Residues 20–31 (FESQAKRLKTEE) are compositionally biased toward basic and acidic residues. Residue K28 forms a Glycyl lysine isopeptide (Lys-Gly) (interchain with G-Cter in SUMO2) linkage. S37 carries the post-translational modification Phosphoserine. The residue at position 48 (T48) is a Phosphothreonine. A compositionally biased stretch (gly residues) spans 57–73 (SGGGDGGDGDGGSGGGG). Acidic residues predominate over residues 74-91 (DGEEGEGGEEGDEGDGDE). Residues 92 to 105 (GGSGGDEGGSGGGP) show a composition bias toward gly residues. A phosphoserine mark is found at S107, S117, and S124. RRM domains are found at residues 125–199 (PVVH…YSTS), 215–293 (NKVL…YARP), and 384–458 (SVVM…VSKQ). K540 is covalently cross-linked (Glycyl lysine isopeptide (Lys-Gly) (interchain with G-Cter in SUMO2)).

As to quaternary structure, interacts with HNRNPL.

In terms of biological role, RNA-binding protein that functions as a regulator of alternative splicing for multiple target mRNAs, including PTPRC/CD45 and STAT5A. Required for alternative splicing of PTPRC. This Mus musculus (Mouse) protein is Heterogeneous nuclear ribonucleoprotein L-like (Hnrnpll).